A 154-amino-acid chain; its full sequence is Endoribonuclease YbeY (154 aa).

Zn(2+) is bound by residues His113, His117, and His123.

Belongs to the endoribonuclease YbeY family. Zn(2+) is required as a cofactor.

The protein localises to the cytoplasm. Single strand-specific metallo-endoribonuclease involved in late-stage 70S ribosome quality control and in maturation of the 3' terminus of the 16S rRNA. This chain is Endoribonuclease YbeY, found in Aeromonas salmonicida (strain A449).